The chain runs to 496 residues: Cytochrome P450 71D181 (496 aa).

A helical; Signal-anchor for type II membrane protein membrane pass occupies residues M1–M21. C435 lines the heme pocket. A disordered region spans residues M471–S496.

The protein belongs to the cytochrome P450 family. It depends on heme as a cofactor. Expressed at low levels in flowers, leaves and stems.

The protein resides in the membrane. The enzyme catalyses alpha-terpinene + 2 reduced [NADPH--hemoprotein reductase] + 2 O2 = carvacrol + 2 oxidized [NADPH--hemoprotein reductase] + 3 H2O + 2 H(+). The catalysed reaction is gamma-terpinene + 2 reduced [NADPH--hemoprotein reductase] + 2 O2 = carvacrol + 2 oxidized [NADPH--hemoprotein reductase] + 3 H2O + 2 H(+). It catalyses the reaction (4S)-limonene + reduced [NADPH--hemoprotein reductase] + O2 = (1S,5R)-carveol + oxidized [NADPH--hemoprotein reductase] + H2O + H(+). It carries out the reaction (4R)-limonene + reduced [NADPH--hemoprotein reductase] + O2 = (1R,5S)-carveol + oxidized [NADPH--hemoprotein reductase] + H2O + H(+). It participates in secondary metabolite biosynthesis; terpenoid biosynthesis. In terms of biological role, involved in the biosynthesis of phenolic monoterpenes natural products thymol and carvacrol which have a broad range of biological activities acting as antimicrobial compounds, insecticides, antioxidants and pharmaceutical agents. Catalyzes the C2-hydroxylation of gamma-terpinene and alpha-terpinene to produce carvacrol. Also mediates the C6-hydroxylation of (4S)-limonene and (4R)-limonene to form carveol. This Origanum vulgare (Wild marjoram) protein is Cytochrome P450 71D181.